The chain runs to 309 residues: tRNA dimethylallyltransferase (309 aa).

G8–S15 provides a ligand contact to ATP. T10–S15 contributes to the substrate binding site. The tract at residues D33–Q36 is interaction with substrate tRNA.

The protein belongs to the IPP transferase family. As to quaternary structure, monomer. Mg(2+) serves as cofactor.

It carries out the reaction adenosine(37) in tRNA + dimethylallyl diphosphate = N(6)-dimethylallyladenosine(37) in tRNA + diphosphate. Catalyzes the transfer of a dimethylallyl group onto the adenine at position 37 in tRNAs that read codons beginning with uridine, leading to the formation of N6-(dimethylallyl)adenosine (i(6)A). The polypeptide is tRNA dimethylallyltransferase (Trichodesmium erythraeum (strain IMS101)).